The primary structure comprises 335 residues: Beta-ketoacyl-[acyl-carrier-protein] synthase III 3 (335 aa).

Residues Cys114 and His256 contribute to the active site. Residues 257-261 (QANHR) form an ACP-binding region. The active site involves Asn286.

The protein belongs to the thiolase-like superfamily. FabH family. As to quaternary structure, homodimer.

The protein resides in the cytoplasm. It catalyses the reaction malonyl-[ACP] + acetyl-CoA + H(+) = 3-oxobutanoyl-[ACP] + CO2 + CoA. It participates in lipid metabolism; fatty acid biosynthesis. Catalyzes the condensation reaction of fatty acid synthesis by the addition to an acyl acceptor of two carbons from malonyl-ACP. Catalyzes the first condensation reaction which initiates fatty acid synthesis and may therefore play a role in governing the total rate of fatty acid production. Possesses both acetoacetyl-ACP synthase and acetyl transacylase activities. Its substrate specificity determines the biosynthesis of branched-chain and/or straight-chain of fatty acids. This chain is Beta-ketoacyl-[acyl-carrier-protein] synthase III 3, found in Streptomyces coelicolor (strain ATCC BAA-471 / A3(2) / M145).